A 74-amino-acid polypeptide reads, in one-letter code: Cell division protein ZapB (74 aa).

Residues 2 to 74 (TLDLLEQLES…LVGKIEETES (73 aa)) are a coiled coil.

It belongs to the ZapB family. As to quaternary structure, homodimer. The ends of the coiled-coil dimer bind to each other, forming polymers. Interacts with FtsZ.

The protein localises to the cytoplasm. Its function is as follows. Non-essential, abundant cell division factor that is required for proper Z-ring formation. It is recruited early to the divisome by direct interaction with FtsZ, stimulating Z-ring assembly and thereby promoting cell division earlier in the cell cycle. Its recruitment to the Z-ring requires functional FtsA or ZipA. This is Cell division protein ZapB from Psychromonas ingrahamii (strain DSM 17664 / CCUG 51855 / 37).